The primary structure comprises 101 residues: MNKLGHNELKECLKTATDSLQTVQPSISQTCTSYGPALGAPLPGRNEVALLTSLPPNYEISEGKPRAISAYVRAGKGNVTRRRKKTHLGNDDGKKEAQEKM.

The disordered stretch occupies residues 76–101 (KGNVTRRRKKTHLGNDDGKKEAQEKM). Positions 88-101 (LGNDDGKKEAQEKM) are enriched in basic and acidic residues.

This is an uncharacterized protein from Homo sapiens (Human).